We begin with the raw amino-acid sequence, 175 residues long: Ribosome maturation factor RimM (175 aa).

Residues glutamate 96–phenylalanine 175 enclose the PRC barrel domain.

Belongs to the RimM family. As to quaternary structure, binds ribosomal protein uS19.

The protein resides in the cytoplasm. Functionally, an accessory protein needed during the final step in the assembly of 30S ribosomal subunit, possibly for assembly of the head region. Essential for efficient processing of 16S rRNA. May be needed both before and after RbfA during the maturation of 16S rRNA. It has affinity for free ribosomal 30S subunits but not for 70S ribosomes. This is Ribosome maturation factor RimM from Actinobacillus succinogenes (strain ATCC 55618 / DSM 22257 / CCUG 43843 / 130Z).